Here is a 258-residue protein sequence, read N- to C-terminus: ER membrane protein complex subunit 3 (258 aa).

Transmembrane regions (helical) follow at residues 8–28 (PALR…IGIL), 123–143 (VVPQ…FILL), and 173–193 (SISW…LLLG).

Belongs to the EMC3 family.

It is found in the cytoplasm. The protein localises to the membrane. In Schizosaccharomyces pombe (strain 972 / ATCC 24843) (Fission yeast), this protein is ER membrane protein complex subunit 3.